The primary structure comprises 403 residues: uncharacterized protein (403 aa).

12 consecutive transmembrane segments (helical) span residues I25–L47, S62–S81, V88–W110, I114–S136, V143–L165, W175–L197, L229–L251, F256–P278, G290–T307, I311–H330, S350–I372, and W376–L398.

This sequence belongs to the major facilitator superfamily.

The protein localises to the cell membrane. This is an uncharacterized protein from Buchnera aphidicola subsp. Baizongia pistaciae (strain Bp).